Reading from the N-terminus, the 421-residue chain is Calreticulin (421 aa).

The signal sequence occupies residues 1-22 (MAFRVPNSSLLSLILLSLLAIA). The N-linked (GlcNAc...) asparagine glycan is linked to Asn56. A disulfide bridge connects residues Cys110 and Cys142. An alpha-D-glucoside contacts are provided by Tyr114, Lys116, Tyr133, and Asp140. Asn156 carries N-linked (GlcNAc...) asparagine glycosylation. Tandem repeats lie at residues 196–207 (KQTGSLYSDWDL), 215–226 (DPEAKKPEDWED), 232–243 (DPEDKKPEGYDD), 250–261 (DPDAKKPEDWDD), 265–275 (GEWTAPTIPNP), 279–289 (GEWKPKKIKNP), and 293–303 (GKWKAPLIDNP). The 4 X approximate repeats stretch occupies residues 196–261 (KQTGSLYSDW…DAKKPEDWDD (66 aa)). The interval 217 to 283 (EAKKPEDWED…NPEYKGEWKP (67 aa)) is disordered. Positions 223 to 232 (DWEDQEYIPD) are enriched in acidic residues. Positions 233-257 (PEDKKPEGYDDIPKEITDPDAKKPE) are enriched in basic and acidic residues. The tract at residues 265–303 (GEWTAPTIPNPEYKGEWKPKKIKNPNFKGKWKAPLIDNP) is 3 X approximate repeats. An alpha-D-glucoside is bound at residue Glu323. The span at 350 to 380 (EETWGKQKDAEKAAFEELEKKLQEEESKEDP) shows a compositional bias: basic and acidic residues. The tract at residues 350–421 (EETWGKQKDA…ETEAEKHDEL (72 aa)) is disordered. The segment covering 381–399 (VDSDAEDDDNEAEDGEESD) has biased composition (acidic residues). The short motif at 418–421 (HDEL) is the Prevents secretion from ER element.

Belongs to the calreticulin family.

It is found in the endoplasmic reticulum lumen. In terms of biological role, molecular calcium-binding chaperone promoting folding, oligomeric assembly and quality control in the ER via the calreticulin/calnexin cycle. This lectin may interact transiently with almost all of the monoglucosylated glycoproteins that are synthesized in the ER. The protein is Calreticulin of Prunus armeniaca (Apricot).